Here is a 278-residue protein sequence, read N- to C-terminus: 2-dehydro-3-deoxyphosphooctonate aldolase (278 aa).

This sequence belongs to the KdsA family.

It is found in the cytoplasm. It carries out the reaction D-arabinose 5-phosphate + phosphoenolpyruvate + H2O = 3-deoxy-alpha-D-manno-2-octulosonate-8-phosphate + phosphate. It functions in the pathway carbohydrate biosynthesis; 3-deoxy-D-manno-octulosonate biosynthesis; 3-deoxy-D-manno-octulosonate from D-ribulose 5-phosphate: step 2/3. Its pathway is bacterial outer membrane biogenesis; lipopolysaccharide biosynthesis. In Bartonella quintana (strain Toulouse) (Rochalimaea quintana), this protein is 2-dehydro-3-deoxyphosphooctonate aldolase.